Consider the following 351-residue polypeptide: (S)-coclaurine N-methyltransferase (351 aa).

Residues 91–92 (QS), 126–134 (VLDLGCGLG), 130–132 (GCG), and 153–158 (TSSVEQ) each bind S-adenosyl-L-methionine. The active site involves cysteine 326.

It belongs to the CFA/CMAS family. In terms of tissue distribution, expressed in roots, stems, flower buds and at lower levels, in leaves. Restricted to sieve elements of the phloem adjacent or proximal to laticifers.

The protein localises to the cytoplasm. The catalysed reaction is (S)-coclaurine + S-adenosyl-L-methionine = (S)-N-methylcoclaurine + S-adenosyl-L-homocysteine + H(+). It participates in alkaloid biosynthesis; (S)-reticuline biosynthesis; (S)-reticuline from (S)-norcoclaurine: step 2/4. In terms of biological role, involved in the biosynthesis of benzylisoquinoline alkaloids. N-methyltransferase methylating (S)-coclaurine. 4'-O-methylcoclaurine and norlaudanine can also be used as substrates. The polypeptide is (S)-coclaurine N-methyltransferase (Papaver somniferum (Opium poppy)).